We begin with the raw amino-acid sequence, 384 residues long: SAGA complex subunit Spt3 (384 aa).

The protein belongs to the SPT3 family. In terms of assembly, component of the Spt-Ada-Gcn5 acetyltransferase (SAGA) complex consisting of wda/Taf5L, Saf6, Taf9, Taf10b, Taf12, Ada1, Spt3, Spt7, Spt20, Sf3b3, Sf3b5, Nipped-A/Tra1, a histone acetyltransferase (HAT) module made up of Gcn5, Ada2b (Isoform B), Ada3 and Sgf29, and a deubiquitinase (DUB) module made up of not/nonstop, Sgf11 and e(y)2 tethered to SAGA by Atxn7. Taf5 and Taf10, which has partially redundant properties with Taf10b, may also be part of this complex.

It is found in the nucleus. The protein localises to the chromosome. In terms of biological role, component of the transcription regulatory complex SAGA, a multiprotein complex that activates transcription by remodeling chromatin and mediating histone acetylation and deubiquitination. The SAGA complex predominantly acetylates histone H3. Required for oogenesis; involved in transcriptional activation. This Drosophila melanogaster (Fruit fly) protein is SAGA complex subunit Spt3.